The sequence spans 225 residues: Transmembrane emp24 domain-containing protein p24delta11 (225 aa).

Residues 1–35 (MDLLPSRYKIHKTKLRWILTMMTMMMMMVMRRGES) form the signal peptide. Residues 36-193 (MRLDMESGNT…ELNRSTNSRM (158 aa)) lie on the Lumenal side of the membrane. The GOLD domain occupies 45–160 (TKCISDDIKT…ITMLEVEVRK (116 aa)). Residues 175 to 188 (LIEREREMQELNRS) adopt a coiled-coil conformation. Omega-N-methylated arginine is present on Arg178. The N-linked (GlcNAc...) asparagine glycan is linked to Asn186. A helical membrane pass occupies residues 194 to 210 (AALSLLSFVVTMSVAGL). At 211 to 225 (QLRHLKSFLERKKLL) the chain is on the cytoplasmic side. A COPII vesicle coat-binding motif is present at residues 218–219 (FL). The COPI vesicle coat-binding signature appears at 218–225 (FLERKKLL).

This sequence belongs to the EMP24/GP25L family. Probably oligomerizes with other members of the EMP24/GP25L family. Associates with the COPI vesicle coat (coatomer). Associates with the COPII vesicle coat (coatomer).

Its subcellular location is the endoplasmic reticulum membrane. The protein resides in the golgi apparatus. The protein localises to the cis-Golgi network membrane. It is found in the golgi stack membrane. Its function is as follows. Involved in vesicular protein trafficking. Mainly functions in the early secretory pathway. Thought to act as cargo receptor at the lumenal side for incorporation of secretory cargo molecules into transport vesicles and to be involved in vesicle coat formation at the cytoplasmic side. This is Transmembrane emp24 domain-containing protein p24delta11 from Arabidopsis thaliana (Mouse-ear cress).